The chain runs to 219 residues: Transmembrane protein 179B (219 aa).

Helical transmembrane passes span 6–26 (PLLL…ITAA), 69–89 (ISVC…YIAF), 105–125 (LGLS…LKIG), and 167–187 (AETA…LVLI). The interval 195-219 (IRPGTEDPSAPPSETEPFFNRPGRP) is disordered.

It belongs to the TMEM179 family.

It is found in the membrane. This Danio rerio (Zebrafish) protein is Transmembrane protein 179B (tmem179b).